We begin with the raw amino-acid sequence, 247 residues long: Adenosylcobinamide-GDP ribazoletransferase (247 aa).

The next 5 helical transmembrane spans lie at Ile-34–Val-54, Cys-59–Phe-79, Gly-113–Leu-133, Ile-138–Tyr-158, and Val-194–Ile-214.

The protein belongs to the CobS family. Mg(2+) is required as a cofactor.

The protein localises to the cell inner membrane. It catalyses the reaction alpha-ribazole + adenosylcob(III)inamide-GDP = adenosylcob(III)alamin + GMP + H(+). It carries out the reaction alpha-ribazole 5'-phosphate + adenosylcob(III)inamide-GDP = adenosylcob(III)alamin 5'-phosphate + GMP + H(+). The protein operates within cofactor biosynthesis; adenosylcobalamin biosynthesis; adenosylcobalamin from cob(II)yrinate a,c-diamide: step 7/7. Its function is as follows. Joins adenosylcobinamide-GDP and alpha-ribazole to generate adenosylcobalamin (Ado-cobalamin). Also synthesizes adenosylcobalamin 5'-phosphate from adenosylcobinamide-GDP and alpha-ribazole 5'-phosphate. The polypeptide is Adenosylcobinamide-GDP ribazoletransferase (Escherichia coli O7:K1 (strain IAI39 / ExPEC)).